The following is a 238-amino-acid chain: Ribonuclease PH (238 aa).

Positions 66 to 88 (LPRSTHTRSDREAARGKQSGRTQ) are disordered. Phosphate-binding positions include Arg-86 and 124–126 (GTR).

The protein belongs to the RNase PH family. In terms of assembly, homohexameric ring arranged as a trimer of dimers.

It catalyses the reaction tRNA(n+1) + phosphate = tRNA(n) + a ribonucleoside 5'-diphosphate. Its function is as follows. Phosphorolytic 3'-5' exoribonuclease that plays an important role in tRNA 3'-end maturation. Removes nucleotide residues following the 3'-CCA terminus of tRNAs; can also add nucleotides to the ends of RNA molecules by using nucleoside diphosphates as substrates, but this may not be physiologically important. Probably plays a role in initiation of 16S rRNA degradation (leading to ribosome degradation) during starvation. This Ralstonia pickettii (strain 12J) protein is Ribonuclease PH.